Consider the following 507-residue polypeptide: Cytochrome P450 3A28 (507 aa).

Residue Cys-442 participates in heme binding.

Belongs to the cytochrome P450 family. Heme is required as a cofactor.

It is found in the endoplasmic reticulum membrane. The protein localises to the microsome membrane. The enzyme catalyses an organic molecule + reduced [NADPH--hemoprotein reductase] + O2 = an alcohol + oxidized [NADPH--hemoprotein reductase] + H2O + H(+). Its function is as follows. Cytochromes P450 are a group of heme-thiolate monooxygenases. In liver microsomes, this enzyme is involved in an NADPH-dependent electron transport pathway. It oxidizes a variety of structurally unrelated compounds, including steroids, fatty acids, and xenobiotics. The polypeptide is Cytochrome P450 3A28 (CYP3A28) (Bos taurus (Bovine)).